The following is a 273-amino-acid chain: Undecaprenyl-diphosphatase (273 aa).

Helical transmembrane passes span 18–40, 45–65, 92–112, 114–134, 151–171, 189–209, 225–245, and 253–273; these read GLTE…LLGF, AKTF…VVFW, GHIL…HEQI, AIFA…LLLA, LTYL…WPGF, YAAS…ATVL, MFAI…KFFL, and FVPF…ILIG.

The protein belongs to the UppP family.

The protein localises to the cell inner membrane. It catalyses the reaction di-trans,octa-cis-undecaprenyl diphosphate + H2O = di-trans,octa-cis-undecaprenyl phosphate + phosphate + H(+). Functionally, catalyzes the dephosphorylation of undecaprenyl diphosphate (UPP). Confers resistance to bacitracin. The polypeptide is Undecaprenyl-diphosphatase (Sodalis glossinidius (strain morsitans)).